The primary structure comprises 131 residues: Sulfurtransferase TusD (131 aa).

Cys81 serves as the catalytic Cysteine persulfide intermediate.

Belongs to the DsrE/TusD family. As to quaternary structure, heterohexamer, formed by a dimer of trimers. The hexameric TusBCD complex contains 2 copies each of TusB, TusC and TusD. The TusBCD complex interacts with TusE.

Its subcellular location is the cytoplasm. Part of a sulfur-relay system required for 2-thiolation of 5-methylaminomethyl-2-thiouridine (mnm(5)s(2)U) at tRNA wobble positions. Accepts sulfur from TusA and transfers it in turn to TusE. The chain is Sulfurtransferase TusD from Photorhabdus laumondii subsp. laumondii (strain DSM 15139 / CIP 105565 / TT01) (Photorhabdus luminescens subsp. laumondii).